Reading from the N-terminus, the 243-residue chain is MNSSQDTIYAQACENISDFQFDEKVAGVFNDMIRRSVPGYGQIIQTLGELAHKYVTPDSHVYDLGCSLGAATLSIRRKIGSRNCTIIAVDNSQSMIERCQENLGAYVSDTPVDLVCGDIRDIKIENASMVVLNFTMQFLAPNDRDALVNKIYKGLKPGGILVLSEKLNFEDSSVQSLLDDLHLDFKRANGYSELEISQKRSSLEHVMKPDTLAQHEMRLKAQGFTHFNLWFQCFNFASMVAIK.

S-adenosyl-L-methionine-binding positions include Tyr40, 65–67 (GCS), 90–91 (DN), 118–119 (DI), Asn133, and Arg200.

This sequence belongs to the class I-like SAM-binding methyltransferase superfamily. Cx-SAM synthase family. Homodimer.

The catalysed reaction is prephenate + S-adenosyl-L-methionine = carboxy-S-adenosyl-L-methionine + 3-phenylpyruvate + H2O. Its function is as follows. Catalyzes the conversion of S-adenosyl-L-methionine (SAM) to carboxy-S-adenosyl-L-methionine (Cx-SAM). This Shewanella woodyi (strain ATCC 51908 / MS32) protein is Carboxy-S-adenosyl-L-methionine synthase.